A 254-amino-acid chain; its full sequence is Triosephosphate isomerase (254 aa).

10-12 (NWK) is a substrate binding site. Residue H99 is the Electrophile of the active site. The active-site Proton acceptor is E169. Substrate-binding positions include G175, S215, and 236–237 (GG).

The protein belongs to the triosephosphate isomerase family. In terms of assembly, homodimer.

The protein localises to the cytoplasm. It carries out the reaction D-glyceraldehyde 3-phosphate = dihydroxyacetone phosphate. The protein operates within carbohydrate biosynthesis; gluconeogenesis. It functions in the pathway carbohydrate degradation; glycolysis; D-glyceraldehyde 3-phosphate from glycerone phosphate: step 1/1. Involved in the gluconeogenesis. Catalyzes stereospecifically the conversion of dihydroxyacetone phosphate (DHAP) to D-glyceraldehyde-3-phosphate (G3P). This chain is Triosephosphate isomerase, found in Chlamydia abortus (strain DSM 27085 / S26/3) (Chlamydophila abortus).